We begin with the raw amino-acid sequence, 319 residues long: Acetyl esterase (319 aa).

The Involved in the stabilization of the negatively charged intermediate by the formation of the oxyanion hole motif lies at 91-93 (HGG). Residues S165, D262, and H292 contribute to the active site.

It belongs to the 'GDXG' lipolytic enzyme family. As to quaternary structure, homodimer. Interacts with MalT and MelA.

The protein resides in the cytoplasm. Functionally, displays esterase activity towards short chain fatty esters (acyl chain length of up to 8 carbons). Able to hydrolyze triacetylglycerol (triacetin) and tributyrylglycerol (tributyrin), but not trioleylglycerol (triolein) or cholesterol oleate. Negatively regulates MalT activity by antagonizing maltotriose binding. Inhibits MelA galactosidase activity. In Escherichia coli O17:K52:H18 (strain UMN026 / ExPEC), this protein is Acetyl esterase.